A 231-amino-acid polypeptide reads, in one-letter code: Large ribosomal subunit protein uL1 (231 aa).

It belongs to the universal ribosomal protein uL1 family. Part of the 50S ribosomal subunit.

In terms of biological role, binds directly to 23S rRNA. The L1 stalk is quite mobile in the ribosome, and is involved in E site tRNA release. Protein L1 is also a translational repressor protein, it controls the translation of the L11 operon by binding to its mRNA. This chain is Large ribosomal subunit protein uL1, found in Allorhizobium ampelinum (strain ATCC BAA-846 / DSM 112012 / S4) (Agrobacterium vitis (strain S4)).